A 643-amino-acid polypeptide reads, in one-letter code: MLNMWKVRELVDKATNVVMNYSEIESKVREATNDDPWGPSGQLMGEIAKATFMYEQFPELMNMLWSRMLKDNKKNWRRVYKSLLLLAYLIRNGSERVVTSAREHIYDLRSLENYHFVDEHGKDQGINIRQKVKELVEFAQDDDRLREERKKAKKNKDKYVGVSSDSVGGFRYSERYDPEPKSKWDEEWDKNKSAFPFSDKLGELSDKIGSTIDDTISKFRRKDREDSPERCSDSDEEKKARRGRSPKGEFKDEEETVTTKHIHITQATETTTTRHKRTANPSKTIDLGAAAHYTGDKASPDQNASTHTPQSSLKTSVPSSKSSGDLVDLFDGTSQSTGGSADLFGGFADFGSAAASGNFPSQVTATSGNGDFGDWSAFNQAPSVPVAASGELFGSASQPAVELVSSSQPALGPPPAASNSSDLFDLMGSSQATMTSSQSMNFSMMSTNTVGLGLPMSRSQPLQNVSTVLQKPNPLYNQNTDMVQKSVSKTLPSTWSDPSVNISLDNLLPGMQPSKPQQPSLNTMIQQQNMQQPMNMMTQSFGAVNLSSPSNMLPVRPQTNPLMGGPMPMSMPNVMTGTMGMAPLGNSPMMNQSMMGMNMNIGMSTTGMGLTGTMGMGMPNLAMTSGTMQPKQDAFANFANFSK.

In terms of domain architecture, ENTH spans 16–149 (NVVMNYSEIE…QDDDRLREER (134 aa)). Residue R29 coordinates a 1,2-diacyl-sn-glycero-3-phospho-(1D-myo-inositol-4,5-bisphosphate). Residues 52–54 (FMY) are interaction with VTI1B. R67 is a binding site for a 1,2-diacyl-sn-glycero-3-phospho-(1D-myo-inositol-4,5-bisphosphate). 2 interaction with VTI1B regions span residues 94 to 96 (SER) and 142 to 153 (DDRLREERKKAK). Phosphoserine is present on residues S163, S166, S173, S205, S210, S227, S245, and S299. The disordered stretch occupies residues 219–331 (FRRKDREDSP…SSGDLVDLFD (113 aa)). Positions 222-239 (KDREDSPERCSDSDEEKK) are enriched in basic and acidic residues. The segment covering 300 to 310 (PDQNASTHTPQ) has biased composition (polar residues). T308 is subject to Phosphothreonine. Low complexity predominate over residues 311 to 323 (SSLKTSVPSSKSS). Phosphoserine is present on residues S312 and S642.

It belongs to the epsin family. Binds clathrin heavy chain and AP-2. Interacts with VTI1B. Interacts with GGA2 (via GAE domain). Interacts with AP1G1 (via GAE domain). Interacts with AP1G2 (via GAE domain).

It is found in the cytoplasm. Its subcellular location is the perinuclear region. It localises to the membrane. The protein localises to the cytoplasmic vesicle. The protein resides in the clathrin-coated vesicle. Binds to membranes enriched in phosphatidylinositol 4,5-bisphosphate (PtdIns(4,5)P2). May have a role in transport via clathrin-coated vesicles from the trans-Golgi network to endosomes. Stimulates clathrin assembly. The protein is Clathrin interactor 1 (CLINT1) of Bos taurus (Bovine).